A 285-amino-acid chain; its full sequence is Phosphatase YwpJ (285 aa).

D7 acts as the Nucleophile in catalysis. Residue D7 participates in Mg(2+) binding. L8 contacts phosphate. A Mg(2+)-binding site is contributed by D9. Phosphate contacts are provided by residues T41–G42 and K214. 2 residues coordinate Mg(2+): D237 and S238. Residues N240 and K282–H283 contribute to the phosphate site.

The protein belongs to the HAD-like hydrolase superfamily. Cof family. Mg(2+) is required as a cofactor.

Its function is as follows. Catalyzes the dephosphorylation of phosphorylated 5-6 carbon sugars and monophosphate nucleotides (NMP) in vitro. To a lesser extent, dephosphorylates flavin mononucleotide (FMN) in vitro. The protein is Phosphatase YwpJ (ywpJ) of Bacillus subtilis (strain 168).